The primary structure comprises 87 residues: Phytosulfokines 2 (87 aa).

Positions 1 to 22 (MANVSALLTIALLLCSTLMCTA) are cleaved as a signal peptide. Residues 23–77 (RPEPAISISITTAADPCNMEKKIEGKLDDMHMVDENCGADDEDCLMRRTLVAHTD) constitute a propeptide that is removed on maturation. Sulfotyrosine is present on residues tyrosine 78 and tyrosine 80. Residues 83–87 (KKKHP) constitute a propeptide that is removed on maturation.

It belongs to the phytosulfokine family. Sulfation is important for activity and for the binding to a putative membrane receptor. Post-translationally, PSK-beta is an enzymatic derivative of PSK-alpha. Expressed in stems, roots and leaves.

Its subcellular location is the secreted. Its function is as follows. Promotes plant cell differentiation, organogenesis and somatic embryogenesis as well as cell proliferation. In Arabidopsis thaliana (Mouse-ear cress), this protein is Phytosulfokines 2 (PSK2).